A 432-amino-acid chain; its full sequence is Nematocyst expressed protein 3-like (432 aa).

The N-terminal stretch at M1–A19 is a signal peptide. 6 cysteine pairs are disulfide-bonded: C52–C91, C59–C84, C73–C88, C125–C140, C157–C176, and C166–C180. ShKT domains lie at C59–C91, V107–C143, and G149–Y183. Over residues G235 to A313 the composition is skewed to low complexity. The disordered stretch occupies residues G235 to H432. Residues A314 to A330 show a composition bias toward pro residues. A compositionally biased stretch (low complexity) spans P331 to G408. Residues K409–H432 show a composition bias toward basic residues.

Belongs to the NEP3 family. Nematocytes. In late planulae, transcripts are found throughout the ectoderm in nematocytes, with high concentration of expressing cells in the oral pole. In primary polyps, is expressed in nematocytes in the body wall and physa ectoderm and in the upper and lower pharynx.

It is found in the nematocyst. The protein localises to the secreted. Functionally, probable toxin. The polypeptide is Nematocyst expressed protein 3-like (Nematostella vectensis (Starlet sea anemone)).